Consider the following 263-residue polypeptide: Regulatory protein RecX (263 aa).

Belongs to the RecX family.

It is found in the cytoplasm. Functionally, modulates RecA activity. The sequence is that of Regulatory protein RecX from Bacillus pumilus (strain SAFR-032).